The following is a 339-amino-acid chain: Dihydroorotate dehydrogenase (quinone) (339 aa).

Residues 62–66 (AGMDK) and Thr-86 each bind FMN. Lys-66 provides a ligand contact to substrate. 111–115 (NRMGF) serves as a coordination point for substrate. FMN is bound by residues Asn-139 and Asn-172. Position 172 (Asn-172) interacts with substrate. Residue Ser-175 is the Nucleophile of the active site. Asn-177 contributes to the substrate binding site. FMN is bound by residues Lys-217 and Thr-245. 246–247 (NT) lines the substrate pocket. FMN-binding positions include Gly-268, Gly-297, and 318–319 (YS).

This sequence belongs to the dihydroorotate dehydrogenase family. Type 2 subfamily. As to quaternary structure, monomer. Requires FMN as cofactor.

It is found in the cell membrane. It carries out the reaction (S)-dihydroorotate + a quinone = orotate + a quinol. It participates in pyrimidine metabolism; UMP biosynthesis via de novo pathway; orotate from (S)-dihydroorotate (quinone route): step 1/1. Functionally, catalyzes the conversion of dihydroorotate to orotate with quinone as electron acceptor. The chain is Dihydroorotate dehydrogenase (quinone) from Shewanella oneidensis (strain ATCC 700550 / JCM 31522 / CIP 106686 / LMG 19005 / NCIMB 14063 / MR-1).